A 230-amino-acid chain; its full sequence is Protein-L-isoaspartate O-methyltransferase 1 (230 aa).

Residue serine 65 is part of the active site.

The protein belongs to the methyltransferase superfamily. L-isoaspartyl/D-aspartyl protein methyltransferase family. Monomer. In terms of tissue distribution, expressed in roots, rosette leaves, stems, cauline leaves, flowers and developing seeds.

Its subcellular location is the cytoplasm. The enzyme catalyses [protein]-L-isoaspartate + S-adenosyl-L-methionine = [protein]-L-isoaspartate alpha-methyl ester + S-adenosyl-L-homocysteine. In terms of biological role, catalyzes the methyl esterification of L-isoaspartyl residues in peptides and proteins that result from spontaneous decomposition of normal L-aspartyl and L-asparaginyl residues. It plays a role in the repair and/or degradation of damaged proteins. Contributes to seed longevity and germination vigor by limiting the abnormal accumulation of the L-isoaspartyl residues in seed proteins. The sequence is that of Protein-L-isoaspartate O-methyltransferase 1 (PIMT1) from Arabidopsis thaliana (Mouse-ear cress).